Consider the following 350-residue polypeptide: Dihydroorotate dehydrogenase (quinone) (350 aa).

FMN contacts are provided by residues 67–71 and G91; that span reads AGFDK. K71 contributes to the substrate binding site. Position 116-120 (116-120) interacts with substrate; it reads NRMGL. FMN-binding residues include N144 and N177. N177 is a binding site for substrate. C180 acts as the Nucleophile in catalysis. Residue N182 coordinates substrate. Residues K213 and T241 each contribute to the FMN site. 242–243 is a binding site for substrate; sequence NT. The disordered stretch occupies residues 245 to 265; that stretch reads TERPASLRSPNAVETGGLSGK. FMN-binding positions include G264, G291, and 312–313; that span reads YT.

It belongs to the dihydroorotate dehydrogenase family. Type 2 subfamily. In terms of assembly, monomer. It depends on FMN as a cofactor.

Its subcellular location is the cell membrane. It carries out the reaction (S)-dihydroorotate + a quinone = orotate + a quinol. The protein operates within pyrimidine metabolism; UMP biosynthesis via de novo pathway; orotate from (S)-dihydroorotate (quinone route): step 1/1. In terms of biological role, catalyzes the conversion of dihydroorotate to orotate with quinone as electron acceptor. This Haloarcula marismortui (strain ATCC 43049 / DSM 3752 / JCM 8966 / VKM B-1809) (Halobacterium marismortui) protein is Dihydroorotate dehydrogenase (quinone) (pyrD).